Consider the following 386-residue polypeptide: HORMA domain-containing protein 1 (386 aa).

The HORMA domain maps to 24-224; it reads TQSLILVKRL…TPFHVLKVKV (201 aa). Disordered regions lie at residues 237-274 and 289-386; these read SIFK…KRDD and EDGN…TPLN. Polar residues predominate over residues 289 to 313; the sequence is EDGNLQSDDSQNSALADSQEKTSQA. Basic and acidic residues predominate over residues 329-343; the sequence is QKPDLELKNQKESAR.

It localises to the nucleus. The protein resides in the chromosome. In terms of biological role, plays a key role in meiotic progression by ensuring that sufficient numbers of processed DNA double-strand breaks (DSBs) are available for successful homology search, promoting synaptonemal-complex formation independently and playing key role in the male mid-pachytene checkpoint and the female meiotic prophase checkpoint. In Xenopus laevis (African clawed frog), this protein is HORMA domain-containing protein 1 (hormad1).